The primary structure comprises 489 residues: uncharacterized protein (489 aa).

Thr-26 is modified (phosphothreonine). Ser-27 is subject to Phosphoserine. 3 helical membrane-spanning segments follow: residues 63–83, 182–202, and 221–241; these read IVYL…IEFA, LVWS…ILCA, and VFKL…IAFL. 3 disordered regions span residues 260-312, 401-435, and 450-489; these read PKTS…APLE, STLL…VPPS, and PSIN…PVVH. Phosphoserine is present on Ser-263. The segment covering 268–282 has biased composition (polar residues); sequence QRGTSSSQPSENDAN. Positions 450 to 465 are enriched in polar residues; that stretch reads PSINNVGGSTAPSVNN. Over residues 477–489 the composition is skewed to low complexity; the sequence is SRSSTLTERPVVH.

The protein resides in the endoplasmic reticulum membrane. This is an uncharacterized protein from Schizosaccharomyces pombe (strain 972 / ATCC 24843) (Fission yeast).